The primary structure comprises 161 residues: Regulator of ribonuclease activity A (161 aa).

It belongs to the RraA family. As to quaternary structure, homotrimer. Binds to both RNA-binding sites in the C-terminal region of Rne and to RhlB.

Its subcellular location is the cytoplasm. Its function is as follows. Globally modulates RNA abundance by binding to RNase E (Rne) and regulating its endonucleolytic activity. Can modulate Rne action in a substrate-dependent manner by altering the composition of the degradosome. Modulates RNA-binding and helicase activities of the degradosome. The chain is Regulator of ribonuclease activity A from Shewanella denitrificans (strain OS217 / ATCC BAA-1090 / DSM 15013).